We begin with the raw amino-acid sequence, 391 residues long: Phosphoglycerate kinase (391 aa).

Substrate contacts are provided by residues 21 to 23 (DLN), Arg36, 59 to 62 (HRGR), Arg113, and Arg146. Residues Lys197, Glu314, and 340 to 343 (GGDT) contribute to the ATP site.

It belongs to the phosphoglycerate kinase family. As to quaternary structure, monomer.

The protein resides in the cytoplasm. The enzyme catalyses (2R)-3-phosphoglycerate + ATP = (2R)-3-phospho-glyceroyl phosphate + ADP. Its pathway is carbohydrate degradation; glycolysis; pyruvate from D-glyceraldehyde 3-phosphate: step 2/5. This Ruthia magnifica subsp. Calyptogena magnifica protein is Phosphoglycerate kinase.